We begin with the raw amino-acid sequence, 130 residues long: Small ribosomal subunit protein uS8 (130 aa).

Belongs to the universal ribosomal protein uS8 family. Part of the 30S ribosomal subunit. Contacts proteins S5 and S12.

Its function is as follows. One of the primary rRNA binding proteins, it binds directly to 16S rRNA central domain where it helps coordinate assembly of the platform of the 30S subunit. This is Small ribosomal subunit protein uS8 from Pseudomonas entomophila (strain L48).